A 69-amino-acid polypeptide reads, in one-letter code: Large ribosomal subunit protein uL29 (69 aa).

Belongs to the universal ribosomal protein uL29 family.

This chain is Large ribosomal subunit protein uL29, found in Parasynechococcus marenigrum (strain WH8102).